The sequence spans 609 residues: N-acetyltransferase ESCO2 (609 aa).

4 disordered regions span residues 1 to 71 (MLSR…RVSP), 100 to 165 (EAKS…TDQV), 197 to 241 (KKPT…SPVR), and 314 to 357 (PDHD…LTAT). Polar residues-rich tracts occupy residues 13-22 (AESNPSKKQI) and 41-54 (ISLN…STPK). Positions 126-135 (PAKKVQKKPR) are enriched in basic residues. Over residues 214-230 (PTYEKPSIRKPVREKEL) the composition is skewed to basic and acidic residues. Positions 345–355 (PLNSSTPSALT) are enriched in polar residues. The CCHH-type zinc finger occupies 392–416 (TTCASCGMLYSTDSPEDNFQHTQFH).

The protein belongs to the acetyltransferase family. ECO subfamily.

Its subcellular location is the nucleus. It localises to the chromosome. The enzyme catalyses L-lysyl-[protein] + acetyl-CoA = N(6)-acetyl-L-lysyl-[protein] + CoA + H(+). Functionally, acetyltransferase required for the establishment of sister chromatid cohesion. Couples the processes of cohesion and DNA replication to ensure that only sister chromatids become paired together. Essential for early development. The chain is N-acetyltransferase ESCO2 (esco2) from Danio rerio (Zebrafish).